The sequence spans 147 residues: Ubiquitin-conjugating enzyme E2-17 kDa (147 aa).

The region spanning 1-147 is the UBC core domain; it reads MALKRINKEL…AREWTRKYAM (147 aa). Catalysis depends on cysteine 85, which acts as the Glycyl thioester intermediate.

The protein belongs to the ubiquitin-conjugating enzyme family.

The enzyme catalyses S-ubiquitinyl-[E1 ubiquitin-activating enzyme]-L-cysteine + [E2 ubiquitin-conjugating enzyme]-L-cysteine = [E1 ubiquitin-activating enzyme]-L-cysteine + S-ubiquitinyl-[E2 ubiquitin-conjugating enzyme]-L-cysteine.. It participates in protein modification; protein ubiquitination. Functionally, catalyzes the covalent attachment of ubiquitin to other proteins. Mediates the selective degradation of short-lived and abnormal proteins. Required for proper telomere behavior during cell divisions and possibly for ubiquitination of proteins involved in postmeiotic stages of spermatogenesis. Deletion mutations are lethal in homozygotes. This chain is Ubiquitin-conjugating enzyme E2-17 kDa (eff), found in Drosophila melanogaster (Fruit fly).